We begin with the raw amino-acid sequence, 977 residues long: AP-2 complex subunit alpha-1 (977 aa).

The disordered stretch occupies residues 614 to 702; the sequence is AKLKRKKGPG…PSLGPTPEEA (89 aa). Phosphoserine is present on residues Ser-626 and Ser-652. A compositionally biased stretch (low complexity) spans 646-657; the sequence is PTPSTVSTPSPS. Phosphothreonine is present on Thr-653. Ser-655 bears the Phosphoserine mark. Residues 666 to 675 are compositionally biased toward pro residues; sequence APPPAAPPAP.

This sequence belongs to the adaptor complexes large subunit family. As to quaternary structure, adaptor protein complex 2 (AP-2) is a heterotetramer composed of two large adaptins (alpha-type subunit AP2A1 or AP2A2 and beta-type subunit AP2B1), a medium adaptin (mu-type subunit AP2M1) and a small adaptin (sigma-type subunit AP2S1). Interacts with HIP1 and RAB11FIP2. Interacts with SLC12A5. Interacts with clathrin. Interacts with SGIP1. Interacts with RFTN1. Interacts with KIAA1107. Interacts with PICALM. Together with AP2B1 and AP2M1, it interacts with ADAM10; this interaction facilitates ADAM10 endocytosis from the plasma membrane during long-term potentiation in hippocampal neurons. Interacts with ABCB11; this interaction regulates cell membrane expression of ABCB11 through its internalization in a clathrin-dependent manner and its subsequent degradation. Probably interacts with ACE2 (via endocytic sorting signal motif); the interaction is inhibited by ACE2 phosphorylation. Expressed in the brain (at protein level). Isoform A: Expressed only in neuronal tissue and skeletal muscle. Isoform B: Widely expressed.

It localises to the cell membrane. Its subcellular location is the membrane. The protein localises to the coated pit. Functionally, component of the adaptor protein complex 2 (AP-2). Adaptor protein complexes function in protein transport via transport vesicles in different membrane traffic pathways. Adaptor protein complexes are vesicle coat components and appear to be involved in cargo selection and vesicle formation. AP-2 is involved in clathrin-dependent endocytosis in which cargo proteins are incorporated into vesicles surrounded by clathrin (clathrin-coated vesicles, CCVs) which are destined for fusion with the early endosome. The clathrin lattice serves as a mechanical scaffold but is itself unable to bind directly to membrane components. Clathrin-associated adaptor protein (AP) complexes which can bind directly to both the clathrin lattice and to the lipid and protein components of membranes are considered to be the major clathrin adaptors contributing the CCV formation. AP-2 also serves as a cargo receptor to selectively sort the membrane proteins involved in receptor-mediated endocytosis. AP-2 seems to play a role in the recycling of synaptic vesicle membranes from the presynaptic surface. AP-2 recognizes Y-X-X-[FILMV] (Y-X-X-Phi) and [ED]-X-X-X-L-[LI] endocytosis signal motifs within the cytosolic tails of transmembrane cargo molecules. AP-2 may also play a role in maintaining normal post-endocytic trafficking through the ARF6-regulated, non-clathrin pathway. The AP-2 alpha subunit binds polyphosphoinositide-containing lipids, positioning AP-2 on the membrane. During long-term potentiation in hippocampal neurons, AP-2 is responsible for the endocytosis of ADAM10. The AP-2 alpha subunit acts via its C-terminal appendage domain as a scaffolding platform for endocytic accessory proteins. The AP-2 alpha and AP-2 sigma subunits are thought to contribute to the recognition of the [ED]-X-X-X-L-[LI] motif. The chain is AP-2 complex subunit alpha-1 (Ap2a1) from Mus musculus (Mouse).